The chain runs to 156 residues: ATP synthase subunit b (156 aa).

The helical transmembrane segment at 5 to 25 (LTLIGQAIAFAIFVAFCMKFV) threads the bilayer.

Belongs to the ATPase B chain family. As to quaternary structure, F-type ATPases have 2 components, F(1) - the catalytic core - and F(0) - the membrane proton channel. F(1) has five subunits: alpha(3), beta(3), gamma(1), delta(1), epsilon(1). F(0) has three main subunits: a(1), b(2) and c(10-14). The alpha and beta chains form an alternating ring which encloses part of the gamma chain. F(1) is attached to F(0) by a central stalk formed by the gamma and epsilon chains, while a peripheral stalk is formed by the delta and b chains.

Its subcellular location is the cell inner membrane. Its function is as follows. F(1)F(0) ATP synthase produces ATP from ADP in the presence of a proton or sodium gradient. F-type ATPases consist of two structural domains, F(1) containing the extramembraneous catalytic core and F(0) containing the membrane proton channel, linked together by a central stalk and a peripheral stalk. During catalysis, ATP synthesis in the catalytic domain of F(1) is coupled via a rotary mechanism of the central stalk subunits to proton translocation. Functionally, component of the F(0) channel, it forms part of the peripheral stalk, linking F(1) to F(0). This chain is ATP synthase subunit b, found in Acinetobacter baylyi (strain ATCC 33305 / BD413 / ADP1).